A 171-amino-acid polypeptide reads, in one-letter code: 3-hydroxyanthranilate 3,4-dioxygenase (171 aa).

O2 is bound at residue R44. The Fe cation site is built by H48, E54, and H92. A substrate-binding site is contributed by E54. Positions 96 and 106 each coordinate substrate. Positions 121, 126, 160, and 163 each coordinate a divalent metal cation.

It belongs to the 3-HAO family. Requires Fe(2+) as cofactor.

It is found in the cytoplasm. It carries out the reaction 3-hydroxyanthranilate + O2 = (2Z,4Z)-2-amino-3-carboxymuconate 6-semialdehyde. It functions in the pathway cofactor biosynthesis; NAD(+) biosynthesis; quinolinate from L-kynurenine: step 3/3. Its function is as follows. Catalyzes the oxidative ring opening of 3-hydroxyanthranilate to 2-amino-3-carboxymuconate semialdehyde, which spontaneously cyclizes to quinolinate. The chain is 3-hydroxyanthranilate 3,4-dioxygenase from Yarrowia lipolytica (strain CLIB 122 / E 150) (Yeast).